A 142-amino-acid chain; its full sequence is Large ribosomal subunit protein uL13 (142 aa).

It belongs to the universal ribosomal protein uL13 family. In terms of assembly, part of the 50S ribosomal subunit.

In terms of biological role, this protein is one of the early assembly proteins of the 50S ribosomal subunit, although it is not seen to bind rRNA by itself. It is important during the early stages of 50S assembly. The protein is Large ribosomal subunit protein uL13 of Aeromonas salmonicida (strain A449).